Here is a 236-residue protein sequence, read N- to C-terminus: Phosphoribosylaminoimidazole-succinocarboxamide synthase (236 aa).

It belongs to the SAICAR synthetase family.

The catalysed reaction is 5-amino-1-(5-phospho-D-ribosyl)imidazole-4-carboxylate + L-aspartate + ATP = (2S)-2-[5-amino-1-(5-phospho-beta-D-ribosyl)imidazole-4-carboxamido]succinate + ADP + phosphate + 2 H(+). It participates in purine metabolism; IMP biosynthesis via de novo pathway; 5-amino-1-(5-phospho-D-ribosyl)imidazole-4-carboxamide from 5-amino-1-(5-phospho-D-ribosyl)imidazole-4-carboxylate: step 1/2. In Streptococcus equi subsp. zooepidemicus (strain H70), this protein is Phosphoribosylaminoimidazole-succinocarboxamide synthase.